A 209-amino-acid chain; its full sequence is Prolactin (209 aa).

Residues 1–24 (MAQRFKGSNLFLTALLCLASQGHA) form the signal peptide. Intrachain disulfides connect cysteine 70-cysteine 184 and cysteine 201-cysteine 209.

It belongs to the somatotropin/prolactin family.

It localises to the secreted. The polypeptide is Prolactin (prl) (Anguilla japonica (Japanese eel)).